Here is a 192-residue protein sequence, read N- to C-terminus: Potassium-transporting ATPase KdpC subunit (192 aa).

A helical transmembrane segment spans residues 14–34 (LTGVLVVLCGLIYPAMVTGIA).

Belongs to the KdpC family. In terms of assembly, the system is composed of three essential subunits: KdpA, KdpB and KdpC.

Its subcellular location is the cell membrane. Functionally, part of the high-affinity ATP-driven potassium transport (or Kdp) system, which catalyzes the hydrolysis of ATP coupled with the electrogenic transport of potassium into the cytoplasm. This subunit acts as a catalytic chaperone that increases the ATP-binding affinity of the ATP-hydrolyzing subunit KdpB by the formation of a transient KdpB/KdpC/ATP ternary complex. In Bacillus cytotoxicus (strain DSM 22905 / CIP 110041 / 391-98 / NVH 391-98), this protein is Potassium-transporting ATPase KdpC subunit.